Consider the following 394-residue polypeptide: Multidrug resistance protein D (394 aa).

Over 1–8 (MKRQRNVN) the chain is Cytoplasmic. A helical membrane pass occupies residues 9–29 (LLLMLVLLVAVGQMAQTIYIP). Topologically, residues 30–46 (AIADMARDLNVREGAVQ) are periplasmic. The helical transmembrane segment at 47-67 (SVMGAYLLTYGVSQLFYGPIS) threads the bilayer. Residues 68 to 73 (DRVGRR) lie on the Cytoplasmic side of the membrane. Residues 74–94 (PVILVGMSIFMLATLVAVTTS) form a helical membrane-spanning segment. Residue serine 95 is a topological domain, periplasmic. The chain crosses the membrane as a helical span at residues 96–116 (LTVLIAASAMQGMGTGVGGVM). Topologically, residues 117 to 134 (ARTLPRDLYERTQLRHAN) are cytoplasmic. The chain crosses the membrane as a helical span at residues 135-155 (SLLNMGILVSPLLAPLIGGLL). The Periplasmic portion of the chain corresponds to 156 to 162 (DTMWNWR). A helical membrane pass occupies residues 163–183 (ACYLFLLVLCAGVTFSMARWM). Residues 184–212 (PETRPVDAPRTRLLTSYKTLFGNSGFNCY) lie on the Cytoplasmic side of the membrane. The chain crosses the membrane as a helical span at residues 213–233 (LLMLIGGLAGIAAFEACSGVL). The Periplasmic portion of the chain corresponds to 234-242 (MGAVLGLSS). The chain crosses the membrane as a helical span at residues 243-263 (MTVSILFILPIPAAFFGAWFA). The Cytoplasmic portion of the chain corresponds to 264-276 (GRPNKRFSTLMWQ). A helical membrane pass occupies residues 277-297 (SVICCLLAGLLMWIPDWFGVM). Asparagine 298 is a topological domain (periplasmic). A helical transmembrane segment spans residues 299-319 (VWTLLVPAALFFFGAGMLFPL). Over 320–329 (ATSGAMEPFP) the chain is Cytoplasmic. A helical membrane pass occupies residues 330–350 (FLAGTAGALVGGLQNIGSGVL). The Periplasmic portion of the chain corresponds to 351–364 (ASLSAMLPQTGQGS). A helical membrane pass occupies residues 365–385 (LGLLMTLMGLLIVLCWLPLAT). At 386 to 394 (RMSHQGQPV) the chain is on the cytoplasmic side.

It belongs to the major facilitator superfamily.

It localises to the cell inner membrane. Its function is as follows. Multidrug resistance pump that participates in a low energy shock adaptive response. In Escherichia coli (strain K12), this protein is Multidrug resistance protein D (emrD).